Consider the following 263-residue polypeptide: 4-hydroxy-tetrahydrodipicolinate reductase (263 aa).

NAD(+) is bound by residues 7 to 12, 96 to 98, and 122 to 125; these read GFKGRM, GTT, and APNF. The active-site Proton donor/acceptor is the histidine 152. Histidine 153 is a (S)-2,3,4,5-tetrahydrodipicolinate binding site. Lysine 156 acts as the Proton donor in catalysis. 162–163 is a binding site for (S)-2,3,4,5-tetrahydrodipicolinate; it reads GT.

It belongs to the DapB family.

The protein resides in the cytoplasm. It catalyses the reaction (S)-2,3,4,5-tetrahydrodipicolinate + NAD(+) + H2O = (2S,4S)-4-hydroxy-2,3,4,5-tetrahydrodipicolinate + NADH + H(+). It carries out the reaction (S)-2,3,4,5-tetrahydrodipicolinate + NADP(+) + H2O = (2S,4S)-4-hydroxy-2,3,4,5-tetrahydrodipicolinate + NADPH + H(+). It participates in amino-acid biosynthesis; L-lysine biosynthesis via DAP pathway; (S)-tetrahydrodipicolinate from L-aspartate: step 4/4. Functionally, catalyzes the conversion of 4-hydroxy-tetrahydrodipicolinate (HTPA) to tetrahydrodipicolinate. The polypeptide is 4-hydroxy-tetrahydrodipicolinate reductase (Listeria monocytogenes serotype 4b (strain CLIP80459)).